Here is a 111-residue protein sequence, read N- to C-terminus: uncharacterized protein (111 aa).

A lipid anchor (N-myristoyl glycine; by host) is attached at G2.

This is an uncharacterized protein from Acanthamoeba polyphaga mimivirus (APMV).